The following is a 657-amino-acid chain: Glycogen debranching enzyme (657 aa).

Asp336 serves as the catalytic Nucleophile. Residue Glu371 is the Proton donor of the active site. A disordered region spans residues 460–479; the sequence is ANGEENRDGTNNNYSNNHGK.

It belongs to the glycosyl hydrolase 13 family.

The catalysed reaction is Hydrolysis of (1-&gt;6)-alpha-D-glucosidic linkages to branches with degrees of polymerization of three or four glucose residues in limit dextrin.. The protein operates within glycan degradation; glycogen degradation. Functionally, removes maltotriose and maltotetraose chains that are attached by 1,6-alpha-linkage to the limit dextrin main chain, generating a debranched limit dextrin. This chain is Glycogen debranching enzyme, found in Escherichia coli O17:K52:H18 (strain UMN026 / ExPEC).